The following is a 178-amino-acid chain: ATP-dependent protease subunit HslV (178 aa).

Threonine 7 is a catalytic residue. Residues glycine 162, cysteine 165, and threonine 168 each contribute to the Na(+) site.

It belongs to the peptidase T1B family. HslV subfamily. In terms of assembly, a double ring-shaped homohexamer of HslV is capped on each side by a ring-shaped HslU homohexamer. The assembly of the HslU/HslV complex is dependent on binding of ATP.

Its subcellular location is the cytoplasm. The enzyme catalyses ATP-dependent cleavage of peptide bonds with broad specificity.. Allosterically activated by HslU binding. Functionally, protease subunit of a proteasome-like degradation complex believed to be a general protein degrading machinery. The chain is ATP-dependent protease subunit HslV from Burkholderia lata (strain ATCC 17760 / DSM 23089 / LMG 22485 / NCIMB 9086 / R18194 / 383).